Consider the following 338-residue polypeptide: mRNA decay activator protein ZFP36L1 (338 aa).

The segment at 1–111 (MTTTLVSATI…QKQPGGGQVN (111 aa)) is necessary and sufficient for the association with mRNA decay enzymes and mRNA decay activation. At serine 54 the chain carries Phosphoserine; by MAPKAPK2. The residue at position 90 (serine 90) is a Phosphoserine; by PKB/AKT1. Serine 92 bears the Phosphoserine; by PKB/AKT1 and MAPKAPK2 mark. The interval 93-113 (EGGERLLPTQKQPGGGQVNSS) is disordered. C3H1-type zinc fingers lie at residues 114–142 (RYKT…HGIH) and 152–180 (KYKT…HNAE). The segment at 185 to 338 (LAGARDLSAD…IFSRLSISDD (154 aa)) is necessary for mRNA decay activation. Serine 203 is modified (phosphoserine; by PKB/AKT1 and MAPKAPK2). A disordered region spans residues 273–338 (SPTTFLFRPM…IFSRLSISDD (66 aa)). A compositionally biased stretch (low complexity) spans 296–318 (QDSLSDQEGYLSSSSSSHSGSDS). Position 318 is a phosphoserine (serine 318). Serine 334 carries the post-translational modification Phosphoserine; by RPS6KA1.

Associates with the cytoplasmic CCR4-NOT deadenylase and RNA exosome complexes to trigger ARE-containing mRNA deadenylation and decay processes. Interacts with CNOT1. Interacts (via N-terminus) with CNOT6. Interacts with CNOT7; this interaction is inhibited in response to phorbol 12-myristate 13-acetate (PMA) treatment in a p38 MAPK-dependent manner. Interacts with DCP1A. Interacts (via N-terminus) with DCP2. Interacts (via N-terminus) with EXOSC2. Interacts with XRN1. Interacts (via phosphorylated form) with YWHAB; this interaction occurs in a protein kinase AKT1-dependent manner. Interacts (via phosphorylated form) with YWHAZ; this interaction occurs in a p38 MAPK- and AKT-signaling pathways. In terms of processing, phosphorylated. Phosphorylated by RPS6KA1 at Ser-334 upon phorbol 12-myristate 13-acetate (PMA) treatment; this phosphorylation results in dissociation of the CCR4-NOT deadenylase complex and induces p38 MAPK-mediated stabilization of the low-density lipoprotein receptor LDLR mRNA. Phosphorylated by protein kinase AKT1 at Ser-92 and Ser-203 in response to insulin; these phosphorylations stabilize ZFP36L1, increase the association with 14-3-3 proteins and mediate ARE-containing mRNA stabilization. AKT1-mediated phosphorylation at Ser-92 does not impair ARE-containing RNA-binding. Phosphorylated at Ser-54, Ser-92 and Ser-203 by MAPKAPK2; these phosphorylations increase the association with 14-3-3 proteins and mediate ARE-containing mRNA stabilization in a protein kinase AKT1-independent manner. MAPKAPK2-mediated phosphorylations at Ser-54, Ser-92 and Ser-203 do not impair ARE-containing RNA-binding. Phosphorylations increase the association with 14-3-3 proteins and mediate ARE-containing mRNA stabilization during early adipogenesis in a p38 MAPK- and AKT-dependent manner. Post-translationally, ubiquitinated. Ubiquitination leads to proteasomal degradation, a process inhibited by phosphorylations at Ser-90, Ser-92 and Ser-203. As to expression, expressed mainly in the basal epidermal layer, weakly in the suprabasal epidermal layers. Expressed in epidermal keratinocytes (at protein level). Expressed in osteoblasts.

The protein resides in the nucleus. It is found in the cytoplasm. It localises to the cytoplasmic granule. Its subcellular location is the P-body. Functionally, zinc-finger RNA-binding protein that destabilizes several cytoplasmic AU-rich element (ARE)-containing mRNA transcripts by promoting their poly(A) tail removal or deadenylation, and hence provide a mechanism for attenuating protein synthesis. Acts as a 3'-untranslated region (UTR) ARE mRNA-binding adapter protein to communicate signaling events to the mRNA decay machinery. Functions by recruiting the CCR4-NOT deadenylase complex and components of the cytoplasmic RNA decay machinery to the bound ARE-containing mRNAs, and hence promotes ARE-mediated mRNA deadenylation and decay processes. Also induces the degradation of ARE-containing mRNAs even in absence of poly(A) tail. Binds to 3'-UTR ARE of numerous mRNAs. Positively regulates early adipogenesis by promoting ARE-mediated mRNA decay of immediate early genes (IEGs). Promotes ARE-mediated mRNA decay of mineralocorticoid receptor NR3C2 mRNA in response to hypertonic stress. Negatively regulates hematopoietic/erythroid cell differentiation by promoting ARE-mediated mRNA decay of the transcription factor STAT5B mRNA. Positively regulates monocyte/macrophage cell differentiation by promoting ARE-mediated mRNA decay of the cyclin-dependent kinase CDK6 mRNA. Promotes degradation of ARE-containing pluripotency-associated mRNAs in embryonic stem cells (ESCs), such as NANOG, through a fibroblast growth factor (FGF)-induced MAPK-dependent signaling pathway, and hence attenuates ESC self-renewal and positively regulates mesendoderm differentiation. May play a role in mediating pro-apoptotic effects in malignant B-cells by promoting ARE-mediated mRNA decay of BCL2 mRNA. In association with ZFP36L2 maintains quiescence on developing B lymphocytes by promoting ARE-mediated decay of several mRNAs encoding cell cycle regulators that help B cells progress through the cell cycle, and hence ensuring accurate variable-diversity-joining (VDJ) recombination and functional immune cell formation. Together with ZFP36L2 is also necessary for thymocyte development and prevention of T-cell acute lymphoblastic leukemia (T-ALL) transformation by promoting ARE-mediated mRNA decay of the oncogenic transcription factor NOTCH1 mRNA. Participates in the delivery of target ARE-mRNAs to processing bodies (PBs). In addition to its cytosolic mRNA-decay function, plays a role in the regulation of nuclear mRNA 3'-end processing; modulates mRNA 3'-end maturation efficiency of the DLL4 mRNA through binding with an ARE embedded in a weak noncanonical polyadenylation (poly(A)) signal in endothelial cells. Also involved in the regulation of stress granule (SG) and P-body (PB) formation and fusion. Plays a role in vasculogenesis and endocardial development. Plays a role in the regulation of keratinocyte proliferation, differentiation and apoptosis. Plays a role in myoblast cell differentiation. The sequence is that of mRNA decay activator protein ZFP36L1 from Homo sapiens (Human).